A 62-amino-acid polypeptide reads, in one-letter code: Small ribosomal subunit protein eS27 (62 aa).

Residues C17, C20, C36, and C39 each coordinate Zn(2+). The C4-type zinc finger occupies 17 to 39 (CPDCENEQTIFDRACTPVDCIVC).

This sequence belongs to the eukaryotic ribosomal protein eS27 family. Part of the 30S ribosomal subunit. Requires Zn(2+) as cofactor.

This is Small ribosomal subunit protein eS27 from Methanospirillum hungatei JF-1 (strain ATCC 27890 / DSM 864 / NBRC 100397 / JF-1).